The following is a 340-amino-acid chain: L-threonine 3-dehydrogenase (340 aa).

Cys-38 contacts Zn(2+). Residues Thr-40 and His-43 each act as charge relay system in the active site. Residues His-63, Glu-64, Cys-93, Cys-96, Cys-99, and Cys-107 each coordinate Zn(2+). Residues Ile-175, Asp-195, Arg-200, 262–264 (LGI), and 286–287 (IY) each bind NAD(+).

Belongs to the zinc-containing alcohol dehydrogenase family. As to quaternary structure, homotetramer. Requires Zn(2+) as cofactor.

The protein resides in the cytoplasm. It carries out the reaction L-threonine + NAD(+) = (2S)-2-amino-3-oxobutanoate + NADH + H(+). It participates in amino-acid degradation; L-threonine degradation via oxydo-reductase pathway; glycine from L-threonine: step 1/2. Functionally, catalyzes the NAD(+)-dependent oxidation of L-threonine to 2-amino-3-ketobutyrate. The chain is L-threonine 3-dehydrogenase from Legionella pneumophila subsp. pneumophila (strain Philadelphia 1 / ATCC 33152 / DSM 7513).